Reading from the N-terminus, the 247-residue chain is Sugar fermentation stimulation protein homolog (247 aa).

It belongs to the SfsA family.

The polypeptide is Sugar fermentation stimulation protein homolog (Oleidesulfovibrio alaskensis (strain ATCC BAA-1058 / DSM 17464 / G20) (Desulfovibrio alaskensis)).